Consider the following 184-residue polypeptide: Glutathione-regulated potassium-efflux system ancillary protein KefG (184 aa).

This sequence belongs to the NAD(P)H dehydrogenase (quinone) family. KefG subfamily. In terms of assembly, interacts with KefB.

The protein resides in the cell inner membrane. It catalyses the reaction a quinone + NADH + H(+) = a quinol + NAD(+). The catalysed reaction is a quinone + NADPH + H(+) = a quinol + NADP(+). Regulatory subunit of a potassium efflux system that confers protection against electrophiles. Required for full activity of KefB. The protein is Glutathione-regulated potassium-efflux system ancillary protein KefG of Shigella dysenteriae serotype 1 (strain Sd197).